Here is a 549-residue protein sequence, read N- to C-terminus: Oxygen-dependent choline dehydrogenase (549 aa).

4 to 33 (DFVIIGSGSAGSALAYRLSEDGANSVVVLE) provides a ligand contact to FAD. The active-site Proton acceptor is the His-465.

Belongs to the GMC oxidoreductase family. FAD serves as cofactor.

It catalyses the reaction choline + A = betaine aldehyde + AH2. The catalysed reaction is betaine aldehyde + NAD(+) + H2O = glycine betaine + NADH + 2 H(+). It functions in the pathway amine and polyamine biosynthesis; betaine biosynthesis via choline pathway; betaine aldehyde from choline (cytochrome c reductase route): step 1/1. Its function is as follows. Involved in the biosynthesis of the osmoprotectant glycine betaine. Catalyzes the oxidation of choline to betaine aldehyde and betaine aldehyde to glycine betaine at the same rate. This Sinorhizobium medicae (strain WSM419) (Ensifer medicae) protein is Oxygen-dependent choline dehydrogenase.